A 384-amino-acid chain; its full sequence is Ferrochelatase, mitochondrial (384 aa).

Cys-156 serves as a coordination point for [2Fe-2S] cluster. Catalysis depends on residues His-190 and Asn-343. Positions 363, 366, and 371 each coordinate [2Fe-2S] cluster.

It belongs to the ferrochelatase family. Homodimer. Homotetramer. The cofactor is [2Fe-2S] cluster.

It localises to the mitochondrion inner membrane. The enzyme catalyses heme b + 2 H(+) = protoporphyrin IX + Fe(2+). It participates in porphyrin-containing compound metabolism; protoheme biosynthesis; protoheme from protoporphyrin-IX: step 1/1. In terms of biological role, catalyzes the ferrous insertion into protoporphyrin IX. Terminal enzyme in heme biosynthesis. Contains four conserved cysteines that function as cluster ligands and play a crucial role in maintaining protein structure. This chain is Ferrochelatase, mitochondrial, found in Drosophila melanogaster (Fruit fly).